The primary structure comprises 265 residues: 4-hydroxy-tetrahydrodipicolinate reductase (265 aa).

NAD(+)-binding positions include 7–12 and aspartate 33; that span reads GASGRM. Arginine 34 serves as a coordination point for NADP(+). NAD(+) contacts are provided by residues 96-98 and 120-123; these read GTT and AANM. Histidine 153 (proton donor/acceptor) is an active-site residue. Histidine 154 contacts (S)-2,3,4,5-tetrahydrodipicolinate. Lysine 157 acts as the Proton donor in catalysis. 163–164 contacts (S)-2,3,4,5-tetrahydrodipicolinate; that stretch reads GT.

This sequence belongs to the DapB family.

The protein localises to the cytoplasm. It carries out the reaction (S)-2,3,4,5-tetrahydrodipicolinate + NAD(+) + H2O = (2S,4S)-4-hydroxy-2,3,4,5-tetrahydrodipicolinate + NADH + H(+). The catalysed reaction is (S)-2,3,4,5-tetrahydrodipicolinate + NADP(+) + H2O = (2S,4S)-4-hydroxy-2,3,4,5-tetrahydrodipicolinate + NADPH + H(+). Its pathway is amino-acid biosynthesis; L-lysine biosynthesis via DAP pathway; (S)-tetrahydrodipicolinate from L-aspartate: step 4/4. Catalyzes the conversion of 4-hydroxy-tetrahydrodipicolinate (HTPA) to tetrahydrodipicolinate. The chain is 4-hydroxy-tetrahydrodipicolinate reductase from Burkholderia vietnamiensis (strain G4 / LMG 22486) (Burkholderia cepacia (strain R1808)).